Reading from the N-terminus, the 843-residue chain is Translation initiation factor IF-2 (843 aa).

The segment at 198–219 is disordered; it reads YKREEEEKKSKAKKAGGKGFKK. The span at 207 to 219 shows a compositional bias: basic residues; sequence SKAKKAGGKGFKK. Residues 345–512 form the tr-type G domain; sequence SRAPVVTIMG…AVLLQSEVLE (168 aa). The G1 stretch occupies residues 354-361; sequence GHVDHGKT. 354-361 is a GTP binding site; sequence GHVDHGKT. A G2 region spans residues 379 to 383; the sequence is GITQH. Positions 400–403 are G3; sequence DTPG. GTP contacts are provided by residues 400 to 404 and 454 to 457; these read DTPGH and NKID. The interval 454-457 is G4; the sequence is NKID. Residues 490–492 are G5; that stretch reads SAK.

The protein belongs to the TRAFAC class translation factor GTPase superfamily. Classic translation factor GTPase family. IF-2 subfamily.

The protein resides in the cytoplasm. Functionally, one of the essential components for the initiation of protein synthesis. Protects formylmethionyl-tRNA from spontaneous hydrolysis and promotes its binding to the 30S ribosomal subunits. Also involved in the hydrolysis of GTP during the formation of the 70S ribosomal complex. In Francisella tularensis subsp. tularensis (strain WY96-3418), this protein is Translation initiation factor IF-2.